We begin with the raw amino-acid sequence, 253 residues long: MSFCVLIPARLASTRLPRKVLLDVGGIPMIEQVRRRALESGAAQVVVAADHPEVVDCIRSYGGEALLTAAEHVCGTERLAEAARLLGLADDAIIVNLQGDEPGMTPALLHATAQLLLDHPQRQMATAAVPITHWDELADPHAVKLVLDAEGCARYFSRAPIPWDRSHFPLSSGQTLPQTPGIWWRHLGLYAYRNAFLQDYAAWSASPLEVIESLEQMRALERGVQIAVYCAAEAPAAGVDTAADLDRVRDLFP.

Belongs to the KdsB family.

Its subcellular location is the cytoplasm. It catalyses the reaction 3-deoxy-alpha-D-manno-oct-2-ulosonate + CTP = CMP-3-deoxy-beta-D-manno-octulosonate + diphosphate. The protein operates within nucleotide-sugar biosynthesis; CMP-3-deoxy-D-manno-octulosonate biosynthesis; CMP-3-deoxy-D-manno-octulosonate from 3-deoxy-D-manno-octulosonate and CTP: step 1/1. Its pathway is bacterial outer membrane biogenesis; lipopolysaccharide biosynthesis. Its function is as follows. Activates KDO (a required 8-carbon sugar) for incorporation into bacterial lipopolysaccharide in Gram-negative bacteria. The polypeptide is 3-deoxy-manno-octulosonate cytidylyltransferase (Acidithiobacillus ferrooxidans (strain ATCC 23270 / DSM 14882 / CIP 104768 / NCIMB 8455) (Ferrobacillus ferrooxidans (strain ATCC 23270))).